The sequence spans 288 residues: Bifunctional protein FolD (288 aa).

NADP(+) is bound by residues 164–166 (GRS), Ser-193, and Ile-234.

This sequence belongs to the tetrahydrofolate dehydrogenase/cyclohydrolase family. Homodimer.

The catalysed reaction is (6R)-5,10-methylene-5,6,7,8-tetrahydrofolate + NADP(+) = (6R)-5,10-methenyltetrahydrofolate + NADPH. The enzyme catalyses (6R)-5,10-methenyltetrahydrofolate + H2O = (6R)-10-formyltetrahydrofolate + H(+). It functions in the pathway one-carbon metabolism; tetrahydrofolate interconversion. Functionally, catalyzes the oxidation of 5,10-methylenetetrahydrofolate to 5,10-methenyltetrahydrofolate and then the hydrolysis of 5,10-methenyltetrahydrofolate to 10-formyltetrahydrofolate. In Nitratidesulfovibrio vulgaris (strain DSM 19637 / Miyazaki F) (Desulfovibrio vulgaris), this protein is Bifunctional protein FolD.